We begin with the raw amino-acid sequence, 343 residues long: Mas-related G-protein coupled receptor member F (343 aa).

Over 1–44 the chain is Extracellular; the sequence is MAGNCSWEAHSTNQNKMCPGMSEALELYSRGFLTIEQIATLPPP. N-linked (GlcNAc...) asparagine glycosylation occurs at Asn4. A helical transmembrane segment spans residues 45 to 66; sequence AVTNYIFLLLCLCGLVGNGLVL. Residues 67 to 82 are Cytoplasmic-facing; that stretch reads WFFGFSIKRTPFSIYF. Residues 83–104 form a helical membrane-spanning segment; that stretch reads LHLASADGIYLFSKAVIALLNM. Topologically, residues 105–123 are extracellular; the sequence is GTFLGSFPDYVRRVSRIVG. A helical membrane pass occupies residues 124 to 144; it reads LCTFFAGVSLLPAISIERCVS. Residues 145–160 lie on the Cytoplasmic side of the membrane; it reads VIFPMWYWRRRPKRLS. The helical transmembrane segment at 161–181 threads the bilayer; the sequence is AGVCALLWLLSFLVTSIHNYF. Residues 182–198 are Extracellular-facing; sequence CMFLGHEASGTACLNMD. Residues 199-220 form a helical membrane-spanning segment; sequence ISLGILLFFLFCPLMVLPCLAL. Residues 221 to 241 are Cytoplasmic-facing; sequence ILHVECRARRRQRSAKLNHVV. A helical transmembrane segment spans residues 242-263; sequence LAIVSVFLVSSIYLGIDWFLFW. Over 264-273 the chain is Extracellular; it reads VFQIPAPFPE. The helical transmembrane segment at 274-294 threads the bilayer; that stretch reads YVTDLCICINSSAKPIVYFLA. The Cytoplasmic segment spans residues 295-343; it reads GRDKSQRLWEPLRVVFQRALRDGAEPGDAASSTPNTVTMEMQCPSGNAS. Residues 318–343 form a disordered region; that stretch reads AEPGDAASSTPNTVTMEMQCPSGNAS. Residues 324–343 are compositionally biased toward polar residues; it reads ASSTPNTVTMEMQCPSGNAS.

Belongs to the G-protein coupled receptor 1 family. Mas subfamily. As to expression, gut, vas deferens, uterus and aorta; barely detectable in liver, kidney, lung, and salivary gland. In the brain, markedly abundant in the cerebellum.

It localises to the cell membrane. Its function is as follows. Orphan receptor. May bind to a neuropeptide and may regulate nociceptor function and/or development, including the sensation or modulation of pain. This Rattus norvegicus (Rat) protein is Mas-related G-protein coupled receptor member F (Mrgprf).